Consider the following 169-residue polypeptide: MKQQLLLLEDVDGLGRSGDLITARPGYVRNYLIPKKKAVIAGAGTLRLQAKLKEQRLIQAAADKADSERIAQALKDIVLEFQVRVDPDNNMYGSVTIADIIAEAAKKNIFLVRKNFPHAHYAIKNLGKKNIPLKLKEEVTATLLVEVTSDNEYVTVLAQGKQTEENQEG.

Belongs to the bacterial ribosomal protein bL9 family.

Binds to the 23S rRNA. This Chlamydia pneumoniae (Chlamydophila pneumoniae) protein is Large ribosomal subunit protein bL9.